Consider the following 334-residue polypeptide: L-lactate dehydrogenase B chain (334 aa).

Position 2 is an N-acetylalanine (Ala-2). Lys-7 is subject to N6-acetyllysine. Residues 30-58 (GQVG…LEDK) and Arg-100 each bind NAD(+). Residue Ser-44 is modified to Phosphoserine. The residue at position 58 (Lys-58) is an N6-acetyllysine. Arg-107 provides a ligand contact to substrate. At Lys-119 the chain carries N6-acetyllysine. Asn-139 contacts NAD(+). Substrate-binding residues include Asn-139 and Arg-170. The active-site Proton acceptor is the His-194. Phosphotyrosine is present on Tyr-240. Thr-249 provides a ligand contact to substrate. Lys-329 carries the N6-acetyllysine modification.

The protein belongs to the LDH/MDH superfamily. LDH family. Homotetramer. Interacts with PTEN upstream reading frame protein MP31; the interaction leads to inhibition of mitochondrial lactate dehydrogenase activity, preventing conversion of lactate to pyruvate in mitochondria.

Its subcellular location is the cytoplasm. The protein localises to the mitochondrion inner membrane. It carries out the reaction (S)-lactate + NAD(+) = pyruvate + NADH + H(+). The protein operates within fermentation; pyruvate fermentation to lactate; (S)-lactate from pyruvate: step 1/1. In terms of biological role, interconverts simultaneously and stereospecifically pyruvate and lactate with concomitant interconversion of NADH and NAD(+). The polypeptide is L-lactate dehydrogenase B chain (Ldhb) (Rattus norvegicus (Rat)).